Reading from the N-terminus, the 440-residue chain is L-gulonolactone oxidase (440 aa).

The FAD-binding PCMH-type domain occupies 17-187; the sequence is YSCEPELYFE…LNVTIQCVPA (171 aa). H54 carries the pros-8alpha-FAD histidine modification. Residues 245 to 267 traverse the membrane as a helical segment; that stretch reads WFWNYAIGYYLLEFLLWISVFVP.

The protein belongs to the oxygen-dependent FAD-linked oxidoreductase family. It depends on FAD as a cofactor.

The protein localises to the microsome membrane. The protein resides in the endoplasmic reticulum membrane. The enzyme catalyses L-gulono-1,4-lactone + O2 = L-ascorbate + H2O2 + H(+). It functions in the pathway cofactor biosynthesis; L-ascorbate biosynthesis via UDP-alpha-D-glucuronate pathway; L-ascorbate from UDP-alpha-D-glucuronate: step 4/4. Functionally, oxidizes L-gulono-1,4-lactone to hydrogen peroxide and L-xylo-hexulonolactone which spontaneously isomerizes to L-ascorbate. The chain is L-gulonolactone oxidase (GULO) from Scyliorhinus torazame (Cloudy catshark).